A 110-amino-acid polypeptide reads, in one-letter code: uncharacterized protein (110 aa).

It to M.jannaschii MJ0123 and MJ1213.

This is an uncharacterized protein from Aquifex aeolicus (strain VF5).